We begin with the raw amino-acid sequence, 259 residues long: Undecaprenyl-diphosphatase (259 aa).

Transmembrane regions (helical) follow at residues 1-21 (MEIFKVIFLGIIQGLTEFLPI), 40-60 (QITLDVFLHFGTVIPVLIIFW), 75-95 (WLTILILVGIIPTGIIGILFE), 101-121 (LFSSVKTVGFMLLVTGFLLYL), 179-199 (SFLLSAPVIFGAGLVELKDAL), 206-226 (LTWLSIIIGTIFAALSGYFAI), and 239-259 (TVFAYYCWIVGIMIIILAGIF).

This sequence belongs to the UppP family.

The protein localises to the cell inner membrane. The enzyme catalyses di-trans,octa-cis-undecaprenyl diphosphate + H2O = di-trans,octa-cis-undecaprenyl phosphate + phosphate + H(+). Its function is as follows. Catalyzes the dephosphorylation of undecaprenyl diphosphate (UPP). Confers resistance to bacitracin. This chain is Undecaprenyl-diphosphatase, found in Halothermothrix orenii (strain H 168 / OCM 544 / DSM 9562).